A 200-amino-acid polypeptide reads, in one-letter code: TATA-box-binding protein 2 (200 aa).

2 tandem repeats follow at residues 25 to 101 (LQNI…ARII) and 115 to 192 (IQNI…YPVL).

This sequence belongs to the TBP family. In terms of assembly, belongs to the TFIID complex together with the TBP-associated factors (TAFs). Binds DNA as monomer.

It localises to the nucleus. In terms of biological role, general transcription factor that functions at the core of the DNA-binding multiprotein factor TFIID. Binding of TFIID to the TATA box is the initial transcriptional step of the pre-initiation complex (PIC), playing a role in the activation of eukaryotic genes transcribed by RNA polymerase II. This is TATA-box-binding protein 2 (TBP2) from Zea mays (Maize).